Reading from the N-terminus, the 255-residue chain is Ornithine decarboxylase antizyme (255 aa).

The protein belongs to the ODC antizyme family. Interacts with ODC and thereby sterically blocks ODC homodimerization.

Ornithine decarboxylase (ODC) antizyme protein that negatively regulates ODC activity and intracellular polyamine biosynthesis in response to increased intracellular polyamine levels. Binds to ODC monomers, inhibiting the assembly of the functional ODC homodimer, and targets the monomers for ubiquitin-independent proteolytic destruction by the 26S proteasome. The protein is Ornithine decarboxylase antizyme (OAZ1) of Candida glabrata (strain ATCC 2001 / BCRC 20586 / JCM 3761 / NBRC 0622 / NRRL Y-65 / CBS 138) (Yeast).